A 290-amino-acid chain; its full sequence is Arylamine N-acetyltransferase 1 (290 aa).

M1 carries the post-translational modification N-acetylmethionine. C68 serves as the catalytic Acyl-thioester intermediate. Residue S103 participates in CoA binding. Position 106-107 (V106–H107) interacts with substrate. Catalysis depends on residues H107 and D122. Residue Y208 coordinates CoA.

The protein belongs to the arylamine N-acetyltransferase family.

It localises to the cytoplasm. It carries out the reaction an arylamine + acetyl-CoA = an N-acetylarylamine + CoA. Participates in the detoxification of a plethora of hydrazine and arylamine drugs. Isoniazid, 2-aminofluorene and anisidine are preferred substrates for NAT-1. No activity with p-aminobenzoic acid (PABA) nor SMZ. This chain is Arylamine N-acetyltransferase 1 (Nat1), found in Mus musculus (Mouse).